The sequence spans 96 residues: Small ribosomal subunit protein bS20 (96 aa).

It belongs to the bacterial ribosomal protein bS20 family.

Its function is as follows. Binds directly to 16S ribosomal RNA. This is Small ribosomal subunit protein bS20 from Anaplasma marginale (strain St. Maries).